We begin with the raw amino-acid sequence, 55 residues long: COP9 signalosome complex subunit 3 (55 aa).

One can recognise a PCI domain in the interval 1-52 (KSIQGLSASPGDLSALHGKEAEMHVLQMIQDGQIHALINQKDGMVRFLEDPE).

It belongs to the CSN3 family. Component of the CSN complex, probably composed of CSN1, CSN2, CSN3, CSN4, CSN5 (CSN5A or CSN5B), CSN6 (CSN6A or CSN6B), CSN7 and CSN8.

It is found in the cytoplasm. The protein resides in the nucleus. Component of the COP9 signalosome complex (CSN), a complex involved in various cellular and developmental processes such as photomorphogenesis and auxin and jasmonate responses. The CSN complex is an essential regulator of the ubiquitin (Ubl) conjugation pathway by mediating the deneddylation of the cullin subunits of SCF-type E3 ligase complexes, leading to decrease the Ubl ligase activity of SCF. It is involved in repression of photomorphogenesis in darkness by regulating the activity of COP1-containing Ubl ligase complexes. The sequence is that of COP9 signalosome complex subunit 3 (CSN3) from Brassica oleracea (Wild cabbage).